The following is a 1735-amino-acid chain: Cadherin-AgCad1 (1735 aa).

The first 30 residues, 1–30 (MKCVASKFNMWLHLGWLLGLLLVLLPLVRC), serve as a signal peptide directing secretion. Residues 31–1574 (QGWGEPRFET…ALTEADETLQ (1544 aa)) are Extracellular-facing. Residues 166 to 1456 (VTDCLFNVYH…KVYIVSESNR (1291 aa)) are extracellular domain (EC). 11 consecutive Cadherin domains span residues 171 to 273 (FNVY…PPIF), 280 to 378 (ERIM…IPEI), 379 to 498 (YMKP…VPKF), 499 to 620 (GRDE…PPQI), 621 to 757 (TLPR…APYF), 767 to 866 (SVKE…QPYH), 879 to 983 (EKIP…TPKL), 985 to 1109 (ELAA…TPSI), 1136 to 1235 (GSPL…EPTF), 1255 to 1350 (AEDP…PPVF), and 1351 to 1461 (QQRL…TFVF). 2 consecutive short sequence motifs (toxin-binding receptor motif) follow at residues 1344–1350 (NDNPPVF) and 1446–1456 (AKVYIVSESNR). The segment at 1358–1569 (GITTNDRVPK…PLATEALTEA (212 aa)) is CR11-MPED, increases toxicity of activated Cry4B toxin, peptide alone is not toxic. Residues 1457 to 1569 (VTFVFLNSVE…PLATEALTEA (113 aa)) are membrane-proximal EC domain (MPED). A helical transmembrane segment spans residues 1575–1595 (IILIVVSAALAVLCVILFVAF). Residues 1596-1735 (FIKIRSLNRQ…ETDDELSHRF (140 aa)) are Cytoplasmic-facing. The span at 1701–1719 (SLNPMANGTDKSNDGAPTS) shows a compositional bias: polar residues. Positions 1701–1735 (SLNPMANGTDKSNDGAPTSNHKKLDETDDELSHRF) are disordered. The segment covering 1722 to 1735 (KKLDETDDELSHRF) has biased composition (basic and acidic residues).

Larval midgut (at protein level).

It localises to the apical cell membrane. The protein localises to the cell projection. Its subcellular location is the microvillus membrane. Its function is as follows. Cadherins are calcium-dependent cell adhesion proteins. They preferentially interact with themselves in a homophilic manner in connecting cells. Functionally, (Microbial infection) Binds to and is probably the functional receptor for B.thuringiensis subsp. israelensis (Bti) insecticidal toxin Cry4B. Trichoplusia ni insect cells stably transfected with this protein become suspectible to Cry4B; cells undergo oncosis, they bleb and ruffle after 20-40 minutes, swell after 40-60 minutes and lyse after 90 minutes. Following toxin treatment in the T.in insect system levels of intracellular 3',5'-cyclic AMP (cAMP) rise 12.5-fold; EDTA but not EGTA pretreatment prevents cAMP increase. Inorganic phosphate also rises 3.4-fold after toxin treatment. In Anopheles gambiae (African malaria mosquito), this protein is Cadherin-AgCad1.